Reading from the N-terminus, the 423-residue chain is UPF0229 protein Pmen_4018 (423 aa).

Positions H65 to E108 are disordered.

This sequence belongs to the UPF0229 family.

In Ectopseudomonas mendocina (strain ymp) (Pseudomonas mendocina), this protein is UPF0229 protein Pmen_4018.